Consider the following 340-residue polypeptide: Holliday junction branch migration complex subunit RuvB (340 aa).

The large ATPase domain (RuvB-L) stretch occupies residues 4 to 184 (TDRIVGGQSL…FGIVQRLEFY (181 aa)). Residues Arg24, Gly65, Lys68, Thr69, Thr70, 131-133 (EDF), Arg174, Tyr184, and Arg221 contribute to the ATP site. Thr69 is a Mg(2+) binding site. Positions 185–255 (SIEELAQIVT…IADLALNLLE (71 aa)) are small ATPAse domain (RuvB-S). Positions 258 to 340 (PLGLDKMDRR…TMPERNLEDE (83 aa)) are head domain (RuvB-H). Residues Arg294, Arg313, and Arg318 each coordinate DNA.

Belongs to the RuvB family. As to quaternary structure, homohexamer. Forms an RuvA(8)-RuvB(12)-Holliday junction (HJ) complex. HJ DNA is sandwiched between 2 RuvA tetramers; dsDNA enters through RuvA and exits via RuvB. An RuvB hexamer assembles on each DNA strand where it exits the tetramer. Each RuvB hexamer is contacted by two RuvA subunits (via domain III) on 2 adjacent RuvB subunits; this complex drives branch migration. In the full resolvosome a probable DNA-RuvA(4)-RuvB(12)-RuvC(2) complex forms which resolves the HJ.

It is found in the cytoplasm. The catalysed reaction is ATP + H2O = ADP + phosphate + H(+). In terms of biological role, the RuvA-RuvB-RuvC complex processes Holliday junction (HJ) DNA during genetic recombination and DNA repair, while the RuvA-RuvB complex plays an important role in the rescue of blocked DNA replication forks via replication fork reversal (RFR). RuvA specifically binds to HJ cruciform DNA, conferring on it an open structure. The RuvB hexamer acts as an ATP-dependent pump, pulling dsDNA into and through the RuvAB complex. RuvB forms 2 homohexamers on either side of HJ DNA bound by 1 or 2 RuvA tetramers; 4 subunits per hexamer contact DNA at a time. Coordinated motions by a converter formed by DNA-disengaged RuvB subunits stimulates ATP hydrolysis and nucleotide exchange. Immobilization of the converter enables RuvB to convert the ATP-contained energy into a lever motion, pulling 2 nucleotides of DNA out of the RuvA tetramer per ATP hydrolyzed, thus driving DNA branch migration. The RuvB motors rotate together with the DNA substrate, which together with the progressing nucleotide cycle form the mechanistic basis for DNA recombination by continuous HJ branch migration. Branch migration allows RuvC to scan DNA until it finds its consensus sequence, where it cleaves and resolves cruciform DNA. The polypeptide is Holliday junction branch migration complex subunit RuvB (Hydrogenovibrio crunogenus (strain DSM 25203 / XCL-2) (Thiomicrospira crunogena)).